A 233-amino-acid polypeptide reads, in one-letter code: MAKLTKRMRVIREKVDGTKLYEINDAVALLKELATAKFVESVDVAVNLGIDPRKSDQNVRGATVLPHGTGREVRVAVFTQGANAEAAKAAGAELVGMDDLAEQIKAGEMNFDVVIASPDAMRVVGMLGQILGPRGLMPNPKTGTVTPNVAEAVKNAKAGQVRYRNDKNGIIHTTIGKVDFTPVQLKENLEALISALKKAKPAVAKGVYVKKVSISTTMGAGVAIDQATLDTAN.

Belongs to the universal ribosomal protein uL1 family. As to quaternary structure, part of the 50S ribosomal subunit.

Its function is as follows. Binds directly to 23S rRNA. The L1 stalk is quite mobile in the ribosome, and is involved in E site tRNA release. Functionally, protein L1 is also a translational repressor protein, it controls the translation of the L11 operon by binding to its mRNA. In Shewanella sp. (strain ANA-3), this protein is Large ribosomal subunit protein uL1.